The following is a 345-amino-acid chain: Heat-inducible transcription repressor HrcA (345 aa).

Belongs to the HrcA family.

Functionally, negative regulator of class I heat shock genes (grpE-dnaK-dnaJ and groELS operons). Prevents heat-shock induction of these operons. The protein is Heat-inducible transcription repressor HrcA of Corynebacterium diphtheriae (strain ATCC 700971 / NCTC 13129 / Biotype gravis).